A 435-amino-acid polypeptide reads, in one-letter code: Apparent malate synthase (435 aa).

Glu-159 and Asn-180 together coordinate Mg(2+). Glu-159 is a binding site for substrate.

Belongs to the HpcH/HpaI aldolase family. Mg(2+) is required as a cofactor. The cofactor is Mn(2+). It depends on Co(2+) as a cofactor. Ca(2+) serves as cofactor.

The catalysed reaction is (S)-malyl-CoA = glyoxylate + acetyl-CoA. It catalyses the reaction (S)-malyl-CoA + H2O = (S)-malate + CoA + H(+). Functionally, involved in the methylaspartate cycle. Catalyzes the biosynthesis of malate in two steps. In the first reaction acetyl-CoA is condensed reversibly with glyoxylate to form (S)-malyl-CoA. In the second reaction (S)-malyl-CoA is hydrolyzed to malate and CoA. It can also catalyze the condensation of propionyl-CoA with glyoxylate and of acetyl-CoA with pyruvate, however the CoA-ester hydrolysis reaction is highly specific for (S)-malyl-CoA. This is Apparent malate synthase (aceB) from Haloarcula marismortui (strain ATCC 43049 / DSM 3752 / JCM 8966 / VKM B-1809) (Halobacterium marismortui).